A 533-amino-acid polypeptide reads, in one-letter code: Protein disulfide isomerase-like 1-5 (533 aa).

The first 22 residues, 1 to 22 (MRARRVVAAAAVLLLFAVVAVA), serve as a signal peptide directing secretion. 2 Thioredoxin domains span residues 51–196 (LGGG…KDQT) and 387–516 (LLEG…EKLQ). Cys-97 (nucleophile) is an active-site residue. Asn-151 carries an N-linked (GlcNAc...) asparagine glycan. Active-site nucleophile residues include Cys-436 and Cys-439. A disulfide bond links Cys-436 and Cys-439. Residues 530-533 (KDEL) carry the Prevents secretion from ER motif.

It belongs to the protein disulfide isomerase family.

Its subcellular location is the endoplasmic reticulum lumen. The enzyme catalyses Catalyzes the rearrangement of -S-S- bonds in proteins.. Its function is as follows. Acts as a protein-folding catalyst that interacts with nascent polypeptides to catalyze the formation, isomerization, and reduction or oxidation of disulfide bonds. May play a role in storage protein biogenesis. In Oryza sativa subsp. japonica (Rice), this protein is Protein disulfide isomerase-like 1-5 (PDIL1-5).